The sequence spans 179 residues: MTALYYTYYPSPVGRLLILSDGESITHIDFEKEQYAPNPKWHKQDELPVFQKVRLAFERYFNGEVECFSNIPLKPEGTAFQQAIWQALREIDYGELSTYGELALRINNPKAVRAVGGAVGSNPISIIIPCHRILGKDRTLTGFGGGLEAKRFLLQLEKIPYIDKGTENTKPRFFKKYHE.

C130 serves as the catalytic Nucleophile; methyl group acceptor.

This sequence belongs to the MGMT family.

It localises to the cytoplasm. The catalysed reaction is a 6-O-methyl-2'-deoxyguanosine in DNA + L-cysteinyl-[protein] = S-methyl-L-cysteinyl-[protein] + a 2'-deoxyguanosine in DNA. It catalyses the reaction a 4-O-methyl-thymidine in DNA + L-cysteinyl-[protein] = a thymidine in DNA + S-methyl-L-cysteinyl-[protein]. Involved in the cellular defense against the biological effects of O6-methylguanine (O6-MeG) and O4-methylthymine (O4-MeT) in DNA. Repairs the methylated nucleobase in DNA by stoichiometrically transferring the methyl group to a cysteine residue in the enzyme. This is a suicide reaction: the enzyme is irreversibly inactivated. The sequence is that of Methylated-DNA--protein-cysteine methyltransferase from Haemophilus influenzae (strain ATCC 51907 / DSM 11121 / KW20 / Rd).